Here is a 369-residue protein sequence, read N- to C-terminus: Serpentine receptor class epsilon-2 (369 aa).

The Extracellular segment spans residues Met-1–Ser-20. A helical membrane pass occupies residues Met-21–Phe-41. The Cytoplasmic portion of the chain corresponds to Asn-42–Val-55. Residues Val-56 to Phe-76 form a helical membrane-spanning segment. At Glu-77 to Met-118 the chain is on the extracellular side. The chain crosses the membrane as a helical span at residues Phe-119–Val-139. Residues Ser-140–Lys-148 are Cytoplasmic-facing. A helical membrane pass occupies residues Trp-149–Phe-169. Over His-170–Ala-178 the chain is Extracellular. A helical transmembrane segment spans residues Val-179–Phe-199. Residues Asn-200–Asn-234 are Cytoplasmic-facing. Residues Trp-235–Ile-255 form a helical membrane-spanning segment. The Extracellular segment spans residues Ala-256–His-274. The chain crosses the membrane as a helical span at residues Thr-275–Ala-295. The Cytoplasmic portion of the chain corresponds to Asp-296–Val-369.

It belongs to the nematode receptor-like protein sre family.

The protein localises to the cell membrane. The sequence is that of Serpentine receptor class epsilon-2 (sre-2) from Caenorhabditis elegans.